Here is a 432-residue protein sequence, read N- to C-terminus: Adenosylhomocysteinase (432 aa).

S2 carries the post-translational modification N-acetylserine. Substrate contacts are provided by T57, D131, and E156. Residue S183 is modified to Phosphoserine. Positions 183–350 (SVTKSKFDNL…EGRLVNLGCA (168 aa)) are NAD binding. Residues K186 and D190 each coordinate substrate. K186 carries the N6-(2-hydroxyisobutyryl)lysine modification. A Phosphotyrosine modification is found at Y193.

This sequence belongs to the adenosylhomocysteinase family. Homotetramer. Interaction with AHCYL1. The cofactor is NAD(+).

It localises to the cytoplasm. It is found in the melanosome. Its subcellular location is the nucleus. The protein localises to the endoplasmic reticulum. The enzyme catalyses S-adenosyl-L-homocysteine + H2O = L-homocysteine + adenosine. The protein operates within amino-acid biosynthesis; L-homocysteine biosynthesis; L-homocysteine from S-adenosyl-L-homocysteine: step 1/1. In terms of biological role, catalyzes the hydrolysis of S-adenosyl-L-homocysteine to form adenosine and homocysteine. Binds copper ions. The sequence is that of Adenosylhomocysteinase (AHCY) from Bos taurus (Bovine).